Here is a 343-residue protein sequence, read N- to C-terminus: Protein RecA (343 aa).

64 to 71 (GPESSGKT) is a binding site for ATP.

This sequence belongs to the RecA family.

The protein resides in the cytoplasm. Can catalyze the hydrolysis of ATP in the presence of single-stranded DNA, the ATP-dependent uptake of single-stranded DNA by duplex DNA, and the ATP-dependent hybridization of homologous single-stranded DNAs. It interacts with LexA causing its activation and leading to its autocatalytic cleavage. The chain is Protein RecA from Bacillus cereus (strain ATCC 14579 / DSM 31 / CCUG 7414 / JCM 2152 / NBRC 15305 / NCIMB 9373 / NCTC 2599 / NRRL B-3711).